The primary structure comprises 359 residues: Popy class I histocompatibility antigen, alpha chain E (359 aa).

The signal sequence occupies residues 1-18 (GTLLLLLSEALALTETWA). The interval 19–108 (GSHSLKYFHT…LRGYYNQTEA (90 aa)) is alpha-1. Topologically, residues 19 to 302 (GSHSLKYFHT…EPASQTTIPI (284 aa)) are extracellular. The N-linked (GlcNAc...) asparagine glycan is linked to asparagine 104. Residues 109 to 200 (GSHTLQWMHG…EKGKETLLHL (92 aa)) form an alpha-2 region. 2 disulfide bridges follow: cysteine 119/cysteine 182 and cysteine 221/cysteine 277. Positions 201–292 (DPPKTHVTHH…GLPEPLTLRW (92 aa)) are alpha-3. Residues 203-291 (PKTHVTHHRI…EGLPEPLTLR (89 aa)) enclose the Ig-like C1-type domain. Residues 293–302 (EPASQTTIPI) are connecting peptide. Residues 303-326 (VGIFAGLVLLGAVVTGATVVAAVM) form a helical membrane-spanning segment. The Cytoplasmic portion of the chain corresponds to 327–359 (WRKKSSGGKGGSYSKAEWSDSAQGSESLTACKA). A disordered region spans residues 330-359 (KSSGGKGGSYSKAEWSDSAQGSESLTACKA). Positions 346 to 359 (DSAQGSESLTACKA) are enriched in polar residues. At serine 351 the chain carries Phosphoserine.

The protein belongs to the MHC class I family. Heterodimer of an alpha chain and a beta chain (beta-2-microglobulin).

The protein resides in the membrane. Functionally, involved in the presentation of foreign antigens to the immune system. This is Popy class I histocompatibility antigen, alpha chain E (Popy-E) from Pongo pygmaeus (Bornean orangutan).